A 365-amino-acid chain; its full sequence is NAC domain-containing protein 37 (365 aa).

In terms of domain architecture, NAC spans 9–158 (VPPGFRFHPT…GWVVCRAFKK (150 aa)). The DNA-binding element occupies 109-164 (IGMRKTLVFYKGRAPNGKKSDWIMHEYRLESDENAPPQEEGWVVCRAFKKRATGQA).

This sequence belongs to the plant vascular related NAC-domain protein family. Interacts with NAC030/VND7. As to expression, expressed in root metaxylem pole and in shoot pre-procambium and procambium. Present in root developing xylems. Specifically expressed in vessels but not in interfascicular fibers in stems.

The protein resides in the nucleus. Transcription activator that binds to the secondary wall NAC binding element (SNBE), 5'-(T/A)NN(C/T)(T/C/G)TNNNNNNNA(A/C)GN(A/C/T)(A/T)-3', in the promoter of target genes. Involved in xylem formation by promoting the expression of secondary wall-associated transcription factors and of genes involved in secondary wall biosynthesis and programmed cell death, genes driven by the secondary wall NAC binding element (SNBE). Triggers thickening of secondary walls. This Arabidopsis thaliana (Mouse-ear cress) protein is NAC domain-containing protein 37.